The following is a 430-amino-acid chain: Dihydroorotase (430 aa).

Residues His-57 and His-59 each coordinate Zn(2+). Residues 59–61 and Asn-91 each bind substrate; that span reads HLR. Zn(2+) contacts are provided by Asp-151, His-178, and His-231. Asn-277 is a binding site for substrate. Asp-304 lines the Zn(2+) pocket. Residue Asp-304 is part of the active site. Residues His-308 and 322–323 each bind substrate; that span reads PG.

It belongs to the metallo-dependent hydrolases superfamily. DHOase family. Class I DHOase subfamily. The cofactor is Zn(2+).

The enzyme catalyses (S)-dihydroorotate + H2O = N-carbamoyl-L-aspartate + H(+). Its pathway is pyrimidine metabolism; UMP biosynthesis via de novo pathway; (S)-dihydroorotate from bicarbonate: step 3/3. Its function is as follows. Catalyzes the reversible cyclization of carbamoyl aspartate to dihydroorotate. The protein is Dihydroorotase of Mycobacterium leprae (strain TN).